We begin with the raw amino-acid sequence, 325 residues long: tRNA N6-adenosine threonylcarbamoyltransferase (325 aa).

Positions 107, 111, and 127 each coordinate Fe cation. Substrate contacts are provided by residues 127–131 (YVSGG), aspartate 159, glycine 172, glutamate 176, and asparagine 257. Residue aspartate 285 participates in Fe cation binding.

The protein belongs to the KAE1 / TsaD family. Monomer. Component of the KEOPS complex that consists of Kae1, Bud32, Cgi121 and Pcc1; the whole complex dimerizes. It depends on Fe(2+) as a cofactor.

The protein localises to the cytoplasm. It catalyses the reaction L-threonylcarbamoyladenylate + adenosine(37) in tRNA = N(6)-L-threonylcarbamoyladenosine(37) in tRNA + AMP + H(+). Its function is as follows. Required for the formation of a threonylcarbamoyl group on adenosine at position 37 (t(6)A37) in tRNAs that read codons beginning with adenine. Is a component of the KEOPS complex that is probably involved in the transfer of the threonylcarbamoyl moiety of threonylcarbamoyl-AMP (TC-AMP) to the N6 group of A37. Kae1 likely plays a direct catalytic role in this reaction, but requires other protein(s) of the complex to fulfill this activity. The protein is tRNA N6-adenosine threonylcarbamoyltransferase of Thermococcus kodakarensis (strain ATCC BAA-918 / JCM 12380 / KOD1) (Pyrococcus kodakaraensis (strain KOD1)).